Consider the following 493-residue polypeptide: D-glyceraldehyde dehydrogenase (NADP(+)) (493 aa).

Residues 144–147 (TPWN), R155, 170–174 (KPSSD), 202–208 (KGSEIGD), 223–246 (GSTS…ILEL), C279, and 379–381 (EIF) contribute to the NADP(+) site. 2 residues coordinate substrate: N147 and R155. Residue E245 is the Proton acceptor of the active site. C279 contributes to the substrate binding site. Residue C279 is the Proton donor of the active site.

It belongs to the aldehyde dehydrogenase family. Glyceraldehyde dehydrogenase subfamily. Homotetramer. Dimer of dimers.

The enzyme catalyses D-glyceraldehyde + NADP(+) + H2O = (R)-glycerate + NADPH + 2 H(+). It participates in carbohydrate degradation; glycolysis. Its activity is regulated as follows. Stable for 2 hours at 60 degrees Celsius but activity is decreased to less than 50 percent within 15 minutes at 70 degrees Celsius. In terms of biological role, NADP-dependent dehydrogenase of the nED (non-phosphorylated Entner-Doudoroff) pathway with highest activity towards glyceraldehydes (e.g. D,L-glyceraldehyde and D-glyceraldehyde), to a lesser extent towards D,L-glyceraldehyde-3-phosphate and glycolaldehyde, but no activity towards aliphatic or aromatic aldehydes. This chain is D-glyceraldehyde dehydrogenase (NADP(+)), found in Picrophilus torridus (strain ATCC 700027 / DSM 9790 / JCM 10055 / NBRC 100828 / KAW 2/3).